The chain runs to 85 residues: Conotoxin Mi15b (85 aa).

Positions 1–23 (MEKLTVLILVAIVLLTIQVLGQS) are cleaved as a signal peptide. Positions 24–49 (DRDKHPKRRPRQYATKRLSALMKGHR) are excised as a propeptide. Residue Gln-50 is modified to Pyrrolidone carboxylic acid.

Belongs to the conotoxin O2 superfamily. Contains 4 disulfide bonds. As to expression, expressed by the venom duct.

It is found in the secreted. This Conus miles (Soldier cone) protein is Conotoxin Mi15b.